A 513-amino-acid polypeptide reads, in one-letter code: Teichoic acid ribitol-phosphate polymerase TarK (513 aa).

Belongs to the CDP-glycerol glycerophosphotransferase family.

It is found in the cell membrane. The catalysed reaction is 4-O-[di(2R)-glycerylphospho]-N-acetyl-beta-D-mannosaminyl-(1-&gt;4)-N-acetyl-alpha-D-glucosaminyl di-trans,octa-cis-undecaprenyl diphosphate + n CDP-L-ribitol = 4-O-[(D-ribitylphospho)(n)-di{(2R)-glycerylphospho}]-N-acetyl-beta-D-mannosaminyl-(1-&gt;4)-N-acetyl-alpha-D-glucosaminyl di-trans,octa-cis-undecaprenyl diphosphate + n CMP + n H(+). It functions in the pathway cell wall biogenesis; poly(ribitol phosphate) teichoic acid biosynthesis. Functionally, can catalyze the polymerization of the main chain of the major teichoic acid by sequential transfer of ribitol phosphate units from CDP-ribitol to the second glycerol phosphate attached to the disaccharide linkage unit. The protein is Teichoic acid ribitol-phosphate polymerase TarK (tarK) of Staphylococcus aureus (strain NCTC 8325 / PS 47).